The sequence spans 346 residues: Extracellular protease (346 aa).

The signal sequence occupies residues 1 to 21; the sequence is MMKATPIALLLAGVLASPLCA. Zn(2+) is bound at residue His-296. Glu-297 is an active-site residue. Zn(2+)-binding residues include His-300 and Asp-309.

This sequence belongs to the peptidase M35 family. Requires Zn(2+) as cofactor.

Heat-labile protease. In Aeromonas hydrophila, this protein is Extracellular protease.